We begin with the raw amino-acid sequence, 133 residues long: MSQNAAVYWGTGRRKCAIARVRLVPGSGELVINGRPGDEYLHFRQPLMSLAKAPLETLGLENQYNIIVNASGGGVAGQAGAIRLGIARALCELSPDNRRPLKVEGYLSRDPRAKERRKYGLKKARKAPQFSKR.

Over residues 102-113 the composition is skewed to basic and acidic residues; that stretch reads KVEGYLSRDPRA. The tract at residues 102 to 133 is disordered; sequence KVEGYLSRDPRAKERRKYGLKKARKAPQFSKR. A compositionally biased stretch (basic residues) spans 114–133; it reads KERRKYGLKKARKAPQFSKR.

This sequence belongs to the universal ribosomal protein uS9 family.

This Gloeobacter violaceus (strain ATCC 29082 / PCC 7421) protein is Small ribosomal subunit protein uS9.